Here is a 304-residue protein sequence, read N- to C-terminus: Acetylglutamate kinase (304 aa).

Residues 69 to 70, R91, and N202 each bind substrate; that span reads GG.

This sequence belongs to the acetylglutamate kinase family. ArgB subfamily.

The protein resides in the cytoplasm. It carries out the reaction N-acetyl-L-glutamate + ATP = N-acetyl-L-glutamyl 5-phosphate + ADP. It functions in the pathway amino-acid biosynthesis; L-arginine biosynthesis; N(2)-acetyl-L-ornithine from L-glutamate: step 2/4. Its function is as follows. Catalyzes the ATP-dependent phosphorylation of N-acetyl-L-glutamate. This chain is Acetylglutamate kinase, found in Caulobacter sp. (strain K31).